The following is a 329-amino-acid chain: 4-hydroxythreonine-4-phosphate dehydrogenase (329 aa).

H136 and T137 together coordinate substrate. Residues H166, H211, and H266 each contribute to the a divalent metal cation site. Positions 274, 283, and 292 each coordinate substrate.

It belongs to the PdxA family. Homodimer. Requires Zn(2+) as cofactor. Mg(2+) is required as a cofactor. Co(2+) serves as cofactor.

It localises to the cytoplasm. The catalysed reaction is 4-(phosphooxy)-L-threonine + NAD(+) = 3-amino-2-oxopropyl phosphate + CO2 + NADH. It participates in cofactor biosynthesis; pyridoxine 5'-phosphate biosynthesis; pyridoxine 5'-phosphate from D-erythrose 4-phosphate: step 4/5. Functionally, catalyzes the NAD(P)-dependent oxidation of 4-(phosphooxy)-L-threonine (HTP) into 2-amino-3-oxo-4-(phosphooxy)butyric acid which spontaneously decarboxylates to form 3-amino-2-oxopropyl phosphate (AHAP). This Escherichia coli O7:K1 (strain IAI39 / ExPEC) protein is 4-hydroxythreonine-4-phosphate dehydrogenase.